The sequence spans 287 residues: Aspartate dehydrogenase domain-containing protein (287 aa).

Residues Ser-24 and Ser-172 each carry the phosphoserine modification.

This sequence belongs to the L-aspartate dehydrogenase family.

The sequence is that of Aspartate dehydrogenase domain-containing protein from Mus musculus (Mouse).